The following is a 355-amino-acid chain: Protein pelota homolog (355 aa).

The protein belongs to the eukaryotic release factor 1 family. Pelota subfamily. In terms of assembly, monomer. A divalent metal cation serves as cofactor.

The protein localises to the cytoplasm. May function in recognizing stalled ribosomes, interact with stem-loop structures in stalled mRNA molecules, and effect endonucleolytic cleavage of the mRNA. May play a role in the release non-functional ribosomes and degradation of damaged mRNAs. Has endoribonuclease activity. This is Protein pelota homolog from Halorubrum lacusprofundi (strain ATCC 49239 / DSM 5036 / JCM 8891 / ACAM 34).